The primary structure comprises 91 residues: Non-specific lipid-transfer protein 1 (91 aa).

4 disulfides stabilise this stretch: C3/C50, C13/C27, C28/C73, and C48/C87.

It belongs to the plant LTP family.

Its function is as follows. Plant non-specific lipid-transfer proteins transfer phospholipids as well as galactolipids across membranes. May play a role in wax or cutin deposition in the cell walls of expanding epidermal cells and certain secretory tissues. The chain is Non-specific lipid-transfer protein 1 from Prunus domestica (Garden plum).